The following is a 396-amino-acid chain: Elongation factor Tu (396 aa).

The 195-residue stretch at 11-205 folds into the tr-type G domain; that stretch reads KPHVNIGTIG…VVDEYIPTPK (195 aa). The tract at residues 20–27 is G1; it reads GHVDHGKT. 20–27 provides a ligand contact to GTP; sequence GHVDHGKT. Residue T27 participates in Mg(2+) binding. A G2 region spans residues 61 to 65; it reads GITIN. A G3 region spans residues 82–85; that stretch reads DAPG. GTP is bound by residues 82 to 86 and 137 to 140; these read DAPGH and NKTD. Residues 137 to 140 are G4; it reads NKTD. A G5 region spans residues 175-177; it reads SAL.

This sequence belongs to the TRAFAC class translation factor GTPase superfamily. Classic translation factor GTPase family. EF-Tu/EF-1A subfamily. As to quaternary structure, monomer.

The protein localises to the cytoplasm. It catalyses the reaction GTP + H2O = GDP + phosphate + H(+). Its function is as follows. GTP hydrolase that promotes the GTP-dependent binding of aminoacyl-tRNA to the A-site of ribosomes during protein biosynthesis. The protein is Elongation factor Tu of Limosilactobacillus fermentum (strain NBRC 3956 / LMG 18251) (Lactobacillus fermentum).